The following is a 316-amino-acid chain: MSIKEQTLMTPYLQFDRNQWAAQRDSVPMTLSEDEIARLKGINEDLSLEEVAEIYLPLSRLLNFYISSNLRRQAVLEQFLGTNGQRIPYIISIAGSVAVGKSTTARVLQALLSRWPEHRRVELITTDGFLHPNQVLKERGLMKKKGFPESYDMHRLVKFVSDLKSGVPNVTAPVYSHLIYDVIPDGDKTVVQPDILILEGLNVLQSGMDYPHDPHHVFVSDFVDFSIYVDAPEDLLQTWYINRFLKFREGAFTDPDSYFHNYAKLTKEEAIKTAMTLWKEINWLNLKQNILPTRERASLILTKSANHAVEEVRLRK.

95-102 is an ATP binding site; it reads GSVAVGKS.

This sequence belongs to the prokaryotic pantothenate kinase family.

Its subcellular location is the cytoplasm. It carries out the reaction (R)-pantothenate + ATP = (R)-4'-phosphopantothenate + ADP + H(+). It participates in cofactor biosynthesis; coenzyme A biosynthesis; CoA from (R)-pantothenate: step 1/5. The protein is Pantothenate kinase of Shigella boydii serotype 18 (strain CDC 3083-94 / BS512).